The chain runs to 600 residues: UvrABC system protein C (600 aa).

Positions 15-92 (EKAGCYLMKD…IKKYQPYYNV (78 aa)) constitute a GIY-YIG domain. The region spanning 197 to 232 (QEVKKDLTNKMLQASADLEFERAGELRDQLKYIEET) is the UVR domain.

This sequence belongs to the UvrC family. As to quaternary structure, interacts with UvrB in an incision complex.

It localises to the cytoplasm. In terms of biological role, the UvrABC repair system catalyzes the recognition and processing of DNA lesions. UvrC both incises the 5' and 3' sides of the lesion. The N-terminal half is responsible for the 3' incision and the C-terminal half is responsible for the 5' incision. This Lactobacillus delbrueckii subsp. bulgaricus (strain ATCC BAA-365 / Lb-18) protein is UvrABC system protein C.